Reading from the N-terminus, the 529-residue chain is Auxin response factor 13 (529 aa).

The disordered stretch occupies residues 1–22; the sequence is MARPPAATAPPPPPPPPPPPPP. Residues 7 to 22 are compositionally biased toward pro residues; the sequence is ATAPPPPPPPPPPPPP. The TF-B3 DNA-binding region spans 128-234; it reads YAKQLTQSDA…KLLVGVRRAA (107 aa). Disordered regions lie at residues 443-462 and 497-529; these read IVTP…PLSA and PEGV…GARL. Residues 444–461 are compositionally biased toward polar residues; that stretch reads VTPQNGSPPDNPVNTPLS. Over residues 499–510 the composition is skewed to acidic residues; it reads GVDDETATEEAS. A compositionally biased stretch (polar residues) spans 511–523; that stretch reads DTSLPDSLTNGHN.

The protein belongs to the ARF family. As to quaternary structure, homo and heterodimers. As to expression, expressed in roots, culms, leaves and young panicles.

It localises to the nucleus. Functionally, auxin response factors (ARFs) are transcriptional factors that bind specifically to the DNA sequence 5'-TGTCTC-3' found in the auxin-responsive promoter elements (AuxREs). This chain is Auxin response factor 13 (ARF13), found in Oryza sativa subsp. japonica (Rice).